The primary structure comprises 439 residues: Na(+)/H(+) antiporter NhaA 1 (439 aa).

The next 11 membrane-spanning stretches (helical) occupy residues 14 to 34, 60 to 80, 98 to 118, 127 to 147, 156 to 176, 179 to 199, 213 to 233, 303 to 323, 335 to 355, 375 to 395, and 408 to 428; these read ITGG…ANLA, ISLH…FIGL, ALPL…YYFF, GWGI…AMVG, IFLS…IAIF, EQIF…LAVA, IGLI…TIAG, HPIS…GVIV, IVLG…FLFA, IIGT…ISDL, and VAVL…LISA.

This sequence belongs to the NhaA Na(+)/H(+) (TC 2.A.33) antiporter family.

Its subcellular location is the cell inner membrane. The catalysed reaction is Na(+)(in) + 2 H(+)(out) = Na(+)(out) + 2 H(+)(in). In terms of biological role, na(+)/H(+) antiporter that extrudes sodium in exchange for external protons. The chain is Na(+)/H(+) antiporter NhaA 1 from Psychromonas ingrahamii (strain DSM 17664 / CCUG 51855 / 37).